The chain runs to 999 residues: MTRPASVLAGPKSRPPIHSQGDKTIEYAEKLLSVFILVPFAGSLIAIFFPSDQRGAISWFAGAIALVCFLVTAGLYPYVASGGVLHYRIDWVPELGLNFTLRMDGFAWLFSALITAIGVLVALYARYYMAEEDPVPRFFALFLAFMGSMLGVVLSGNLILLAVFWELTSIVSFLLIGYWHHNAHARDGARMALTITGTGGLAMFVGLIIIGKIVGSYELDAVLASGDAIRNHPLYGTVLVLVLLGALTKSAQFPFHFWLPHAMAAPTPVSAYLHSATMVKAGVFLLVRFWPVMAGTEAWFWIVGLAGLTTLLLGAYFAIFQQDLKGLLAYSTISHLGLITVLLSLGSPLAAVAAVFHIVNHATFKASLFMAAGIIDHESGTRDIRRLGGLFHFMPITATLAMVASAAMAGVPLLNGFLSKEMFFAEAIETHLVNPLDTVTPYVATIAGMFAVTYSLRFIHGVFFGRPPADLPRKPHEPPRWMRAPLDFLVLACLVVGIIPAQTIGPFLHTAVLSVLREGTPDYSLSVWHGWNIPLIMSFVALSGGIGLYFLMRSYLATAVEGPPVFRLLQGQRIFERVLVTLSWKWARWLEQRLGTRRLQPQMRLLVFLALAAGASPLLLGNFELPPLVIRGIDPAFALLWAIGIACAIGSAYQAKFHRLASLVLLGGAGLVTCITFVWLSAPDLAVTQLLVEIVTTVLILLGLRWLPKRIEEPVAAEDISIRVRLRRLRDLLLAIGAGGGMMLIAYTVMTRPLPETIASYFLERAYREGGGTNVVNVILVDFRGFDTLGEIAVLCIVALTVFALLLRFRPQSDSLEAPEQQKVQNAFDDDHPDRAAGDSVAEYLFIPAVIMRWMFPVTGMLAAFLFLRGHDLPGGGFAAGIAMSIGFILQYMSGGTRWVEERLRIHPLRWMSIGLLVATATGVGSWFFGYPFLTSHAQYASLPVVGKFPLASAILFDLGVFSLVLGATVLILIALAHQSVRAPRAHAKAARSDKEAVR.

The interval 1 to 20 is disordered; it reads MTRPASVLAGPKSRPPIHSQ. 24 helical membrane passes run 31 to 48, 63 to 85, 106 to 128, 138 to 160, 162 to 181, 191 to 213, 233 to 255, 270 to 292, 299 to 321, 336 to 358, 389 to 411, 442 to 464, 488 to 510, 530 to 552, 604 to 621, 636 to 653, 660 to 682, 686 to 708, 729 to 751, 788 to 807, 846 to 868, 878 to 900, 913 to 935, and 955 to 977; these read LLSVFILVPFAGSLIAIF, AIALVCFLVTAGLYPYVASGGVL, FAWLFSALITAIGVLVALYARYY, FFALFLAFMGSMLGVVLSGNLIL, AVFWELTSIVSFLLIGYWHH, MALTITGTGGLAMFVGLIIIGKI, PLYGTVLVLVLLGALTKSAQFPF, SAYLHSATMVKAGVFLLVRFWPV, WFWIVGLAGLTTLLLGAYFAIFQ, LGLITVLLSLGSPLAAVAAVFHI, GLFHFMPITATLAMVASAAMAGV, YVATIAGMFAVTYSLRFIHGVFF, FLVLACLVVGIIPAQTIGPFLHT, GWNIPLIMSFVALSGGIGLYFLM, RLLVFLALAAGASPLLLG, AFALLWAIGIACAIGSAY, LASLVLLGGAGLVTCITFVWLSA, AVTQLLVEIVTTVLILLGLRWLP, LRDLLLAIGAGGGMMLIAYTVMT, TLGEIAVLCIVALTVFALLL, FIPAVIMRWMFPVTGMLAAFLFL, FAAGIAMSIGFILQYMSGGTRWV, SIGLLVATATGVGSWFFGYPFLT, and ILFDLGVFSLVLGATVLILIALA.

In the N-terminal section; belongs to the CPA3 antiporters (TC 2.A.63) subunit A family. It in the C-terminal section; belongs to the CPA3 antiporters (TC 2.A.63) subunit B family. As to quaternary structure, may form a heterooligomeric complex that consists of six subunits: PhaAB, PhaC, PhaD, PhaE, PhaF and PhaG.

It is found in the cell membrane. Functionally, part of a K(+) efflux system which is required for the adaptation of R.meliloti to alkaline pH as well as for the infection process during symbiotic nodule development. The protein is Probable K(+)/H(+) antiporter subunit A/B (phaAB) of Rhizobium meliloti (strain 1021) (Ensifer meliloti).